Here is a 72-residue protein sequence, read N- to C-terminus: MSNSMINPSIVNLLEKVDDRYSLVTITSKRSRQLIDGAKPLVDIDSTKPVTVAINEIHEGKITYKTVKEGIK.

It belongs to the RNA polymerase subunit omega family. As to quaternary structure, the RNAP catalytic core consists of 2 alpha, 1 beta, 1 beta' and 1 omega subunit. When a sigma factor is associated with the core the holoenzyme is formed, which can initiate transcription.

It catalyses the reaction RNA(n) + a ribonucleoside 5'-triphosphate = RNA(n+1) + diphosphate. Promotes RNA polymerase assembly. Latches the N- and C-terminal regions of the beta' subunit thereby facilitating its interaction with the beta and alpha subunits. In Clostridium botulinum (strain Langeland / NCTC 10281 / Type F), this protein is DNA-directed RNA polymerase subunit omega.